The following is a 175-amino-acid chain: Large ribosomal subunit protein uL10 (175 aa).

It belongs to the universal ribosomal protein uL10 family. Part of the ribosomal stalk of the 50S ribosomal subunit. The N-terminus interacts with L11 and the large rRNA to form the base of the stalk. The C-terminus forms an elongated spine to which L12 dimers bind in a sequential fashion forming a multimeric L10(L12)X complex.

In terms of biological role, forms part of the ribosomal stalk, playing a central role in the interaction of the ribosome with GTP-bound translation factors. This Delftia acidovorans (strain DSM 14801 / SPH-1) protein is Large ribosomal subunit protein uL10.